The sequence spans 368 residues: Trans-enoyl reductase TwmE (368 aa).

Residue 49-52 (SDYK) participates in NADP(+) binding. 135-142 (FKAATLGT) provides a ligand contact to substrate. NADP(+) contacts are provided by residues 204–207 (SPRS), tyrosine 222, and 269–270 (LE). 290 to 294 (SAELY) is a binding site for substrate. 360-361 (HP) serves as a coordination point for NADP(+).

This sequence belongs to the zinc-containing alcohol dehydrogenase family. As to quaternary structure, monomer.

Its pathway is secondary metabolite biosynthesis. Its function is as follows. Trans-enoyl reductase; part of the gene cluster that mediates the biosynthesis of wortmanamides A and B, reduced long-chain polyketides amidated with a specific omega-amino acid, 5-aminopentanoic acid (5PA). The PKS modules of TwmB are involved in the synthesis of the polyketide backbone, whereas the non-canonical C domain of TwmB is a bonafide condensation domain that specifically selects 5PA and catalyzes amidation to release polyketide chain. The C domain clearly prefers C16 and C18 fatty acyl substrates, which is consistent with simultaneous formation of both octaketide and nonaketide acyl amides wortmanamides A and B. Because TwmB lacks a designated enoylreductase (ER) domain, the required activity is provided the enoyl reductase TwmE. The roles of the remaining enzymes have still to be clarified. The polypeptide is Trans-enoyl reductase TwmE (Talaromyces wortmannii (Penicillium wortmannii)).